The primary structure comprises 336 residues: NEDD4 family-interacting protein 2 (336 aa).

2 disordered regions span residues 1 to 24 (MARR…RGAP) and 37 to 156 (SAAA…SITV). The Cytoplasmic segment spans residues 1–231 (MARRRSQRVC…ADQLRVGNDG (231 aa)). The span at 37-48 (SAAAAGATGSEE) shows a compositional bias: low complexity. Over residues 78 to 99 (EHGEDSLSRKPDPEPGRMDHHQ) the composition is skewed to basic and acidic residues. The interval 148 to 151 (PPPY) is interaction with NEDD4. Positions 148 to 151 (PPPY) match the PPxY motif 1 motif. Phosphotyrosine; by SRC occurs at positions 151, 167, 171, and 177. Short sequence motifs (PPxY motif) lie at residues 174-177 (PPPY) and 184-186 (PTY). Residues 232–252 (IFMLAFFMAFIFNWLGFCLSF) traverse the membrane as a helical segment. The Extracellular portion of the chain corresponds to 253–257 (CITNT). Residues 258–278 (IAGRYGAICGFGLSLIKWILI) traverse the membrane as a helical segment. Residues 279-287 (VRFSDYFTG) are Cytoplasmic-facing. Residues 288-308 (YFNGQYWLWWIFLVLGLLLFF) form a helical membrane-spanning segment. Residues 309–336 (RGFVNYLKVRNMSESMAAAHRTRYFFLL) lie on the Extracellular side of the membrane.

As to quaternary structure, forms heterodimers with NDFIP1. Interacts with HECT domain-containing E3 ubiquitin-protein ligases, including NEDD4. Interacts with NEDD4L. Interacts with PTEN. When phosphorylated at Tyr-167, interacts with SRC and LYN SH2 domain. May thus act as a scaffold that recruits SRC to NDFIP1, enhancing NDFIP1 phosphorylation. Interacts with SLC11A2/DMT1. May interact with phosphorylated EGFR. Interacts with KCNH2. Post-translationally, ubiquitinated by NEDD4 and ITCH. Also ubiquitinated by NEDD4L. Ubiquitination by NEDD4 or NEDD4L does not affect turnover. In terms of processing, undergoes transient tyrosine-phosphorylation following EGF stimulation, most probably catalyzed by SRC. Phosphorylation on Tyr-151, Tyr-171 and Tyr-177 are dependent on the phosphorylation on Tyr-167. Also phosphorylated by LYN and FYN. Expressed in brain, lung, heart, skeletal muscle, kidney, liver and placenta.

The protein resides in the endosome membrane. It localises to the golgi apparatus membrane. Its subcellular location is the endosome. It is found in the multivesicular body membrane. Functionally, activates HECT domain-containing E3 ubiquitin-protein ligases, including ITCH, NEDD4, NEDD4L, SMURF2, WWP1 and WWP2, and consequently modulates the stability of their targets. As a result, may control many cellular processes. Recruits ITCH, NEDD4 and SMURF2 to endosomal membranes. Negatively regulates KCNH2 potassium channel activity by decreasing its cell-surface expression and interfering with channel maturation through recruitment of NEDD4L to the Golgi apparatus and multivesicular body where it mediates KCNH2 degradation. May modulate EGFR signaling. Together with NDFIP1, limits the cytokine signaling and expansion of effector Th2 T-cells by promoting degradation of JAK1, probably by ITCH- and NEDD4L-mediated ubiquitination. This chain is NEDD4 family-interacting protein 2 (NDFIP2), found in Homo sapiens (Human).